We begin with the raw amino-acid sequence, 552 residues long: MADGVDHIDIYADVGEEFNQEAEYGGHDQIDLYDDVISPSANNGDAPEDRDYMDTLPPTVGDDVGKGAAPNVVYTYTGKRIALYIGNLTRWTTDEDLTEAVHSLGVNDILEIKFFENRANGQSKGFALVGVGSEASSKKLMDLLPKRELHGQNPVVTPCNKQFLSQFEMQSRKTTQSGQMSGEGKAGPPGGSSRAAFPQGGRGRGRFPGAVPGGDRFPGPTGPGGPPPPFPAGQTPPRPPLGPPGPPGPPGPPPPGQVLPPPLAGPPNRGDRPPPPVLFPGQPFGQPPLGPLPPGPPPPVPGYGPPPGPPPPQQGPPPPPGPFPPRPPGPLGPPLTLAPPPHLPGPPPGAPPPAPHVNPAFFPPPTNSGMPTSDSRGPPPTDPYGRPPPYDRGDYGPPGREMDTARTPLSEAEFEEIMNRNRAISSSAISRAVSDASVGDYGSAIETLVTAISLIKQSKVSADDRCKVLISSLQDCLHGIESKSYGSGSRRRERSRERDHSRSREKSRRHKSRSRDRHDDYYRERSRERERHRDRDRDRDRERDREREYRHR.

Residues 1-213 form a necessary for interaction with NXF1 region; sequence MADGVDHIDI…RGRFPGAVPG (213 aa). Residues 81–161 form the RRM domain; it reads IALYIGNLTR…QNPVVTPCNK (81 aa). Residues 81–161 form a necessary for interaction with NUDT21/CPSF5 region; it reads IALYIGNLTR…QNPVVTPCNK (81 aa). The interval 81-161 is necessary for nuclear paraspeckles localization; it reads IALYIGNLTR…QNPVVTPCNK (81 aa). At threonine 157 the chain carries Phosphothreonine. A compositionally biased stretch (polar residues) spans 169–180; sequence MQSRKTTQSGQM. Disordered regions lie at residues 169-411 and 479-552; these read MQSR…PLSE and GIES…YRHR. The short motif at 202 to 206 is the GAR element; that stretch reads RGRGR. The span at 207–219 shows a compositional bias: low complexity; the sequence is FPGAVPGGDRFPG. 3 stretches are compositionally biased toward pro residues: residues 220-265, 285-366, and 377-388; these read PTGP…PLAG, GQPP…PPPT, and GPPPTDPYGRPP. Residues 389–404 show a composition bias toward basic and acidic residues; it reads PYDRGDYGPPGREMDT. Phosphothreonine is present on residues threonine 404 and threonine 407. The segment at 404-552 is sufficient for nuclear speckle localization; it reads TARTPLSEAE…RDREREYRHR (149 aa). The segment at 405 to 552 is necessary for RNA-binding; the sequence is ARTPLSEAEF…RDREREYRHR (148 aa). Residues 481–552 form a necessary for interaction with SRSF3, SRSF7 and TRA2B/SFRS10 region; that stretch reads ESKSYGSGSR…RDREREYRHR (72 aa). The tract at residues 491–552 is arg/Ser-rich domain; it reads RRERSRERDH…RDREREYRHR (62 aa). A compositionally biased stretch (basic and acidic residues) spans 494–504; that stretch reads RSRERDHSRSR. Phosphoserine occurs at positions 495, 501, 512, 514, and 526. Over residues 505–515 the composition is skewed to basic residues; the sequence is EKSRRHKSRSR. The sufficient for nuclear targeting stretch occupies residues 511–552; it reads KSRSRDRHDDYYRERSRERERHRDRDRDRDRERDREREYRHR. Residues 516-552 are compositionally biased toward basic and acidic residues; that stretch reads DRHDDYYRERSRERERHRDRDRDRDRERDREREYRHR.

This sequence belongs to the RRM CPSF6/7 family. In terms of assembly, component of the cleavage factor Im (CFIm) complex which is a heterotetramer composed of two subunits of NUDT21/CPSF5 and two subunits of CPSF6 or CPSF7 or a heterodimer of CPSF6 and CPSF7. The cleavage factor Im (CFIm) complex associates with the CPSF and CSTF complexes to promote the assembly of the core mRNA 3'-processing machinery. Associates with the exon junction complex (EJC). Associates with the 80S ribosome particle. Interacts (via the RRM domain) with NUDT21/CPSF5; this interaction is direct and enhances binding to RNA. Interacts (via Arg/Ser-rich domain) with FIP1L1 (preferentially via unphosphorylated form and Arg/Glu/Asp-rich domain); this interaction mediates, at least in part, the interaction between the CFIm and CPSF complexes and may be inhibited by CPSF6 hyper-phosphorylation. Interacts (via N-terminus) with NXF1; this interaction is direct. Interacts with SRSF3. Interacts with SRSF7. Interacts with SNRNP70. Interacts with TRA2B/SFRS10. Interacts with UPF1. Interacts with UPF3B. Interacts with VIRMA. Interacts (via Arg/Ser-rich domain) with TNPO3; promoting nuclear import of CPSF6 independently of its phosphorylation status. Interacts with YTHDC1. Phosphorylated. Phosphorylated in the Arg/Ser-rich domain by SRPK1, in vitro. Post-translationally, symmetrically dimethylated on arginine residues in the GAR motif by PRMT5 in a WDR77- and CLNS1A-dependent manner. Asymmetrically dimethylated on arginine residues in the GAR motif by PRMT1.

Its subcellular location is the nucleus. The protein resides in the nucleoplasm. The protein localises to the nucleus speckle. It is found in the cytoplasm. In terms of biological role, component of the cleavage factor Im (CFIm) complex that functions as an activator of the pre-mRNA 3'-end cleavage and polyadenylation processing required for the maturation of pre-mRNA into functional mRNAs. CFIm contributes to the recruitment of multiprotein complexes on specific sequences on the pre-mRNA 3'-end, so called cleavage and polyadenylation signals (pA signals). Most pre-mRNAs contain multiple pA signals, resulting in alternative cleavage and polyadenylation (APA) producing mRNAs with variable 3'-end formation. The CFIm complex acts as a key regulator of cleavage and polyadenylation site choice during APA through its binding to 5'-UGUA-3' elements localized in the 3'-untranslated region (UTR) for a huge number of pre-mRNAs. CPSF6 enhances NUDT21/CPSF5 binding to 5'-UGUA-3' elements localized upstream of pA signals and promotes RNA looping, and hence activates directly the mRNA 3'-processing machinery. Plays a role in mRNA export. This chain is Cleavage and polyadenylation specificity factor subunit 6, found in Pongo abelii (Sumatran orangutan).